The chain runs to 473 residues: ATP synthase subunit beta (473 aa).

Position 153 to 160 (153 to 160) interacts with ATP; sequence GGAGVGKT.

It belongs to the ATPase alpha/beta chains family. As to quaternary structure, F-type ATPases have 2 components, CF(1) - the catalytic core - and CF(0) - the membrane proton channel. CF(1) has five subunits: alpha(3), beta(3), gamma(1), delta(1), epsilon(1). CF(0) has three main subunits: a(1), b(2) and c(9-12). The alpha and beta chains form an alternating ring which encloses part of the gamma chain. CF(1) is attached to CF(0) by a central stalk formed by the gamma and epsilon chains, while a peripheral stalk is formed by the delta and b chains.

The protein resides in the cell inner membrane. The enzyme catalyses ATP + H2O + 4 H(+)(in) = ADP + phosphate + 5 H(+)(out). Its function is as follows. Produces ATP from ADP in the presence of a proton gradient across the membrane. The catalytic sites are hosted primarily by the beta subunits. The polypeptide is ATP synthase subunit beta (Rickettsia bellii (strain OSU 85-389)).